We begin with the raw amino-acid sequence, 123 residues long: Large ribosomal subunit protein uL14 (123 aa).

This sequence belongs to the universal ribosomal protein uL14 family. Part of the 50S ribosomal subunit. Forms a cluster with proteins L3 and L19. In the 70S ribosome, L14 and L19 interact and together make contacts with the 16S rRNA in bridges B5 and B8.

In terms of biological role, binds to 23S rRNA. Forms part of two intersubunit bridges in the 70S ribosome. In Aliivibrio fischeri (strain ATCC 700601 / ES114) (Vibrio fischeri), this protein is Large ribosomal subunit protein uL14.